Consider the following 384-residue polypeptide: S-adenosylmethionine synthase (384 aa).

His-15 is an ATP binding site. Residue Asp-17 coordinates Mg(2+). K(+) is bound at residue Glu-43. 2 residues coordinate L-methionine: Glu-56 and Gln-99. Positions 99 to 109 are flexible loop; the sequence is QSPDINQGVDK. Residues 164–166, 230–231, Asp-239, 245–246, Ala-262, and Lys-266 each bind ATP; these read DAK, RF, and RK. Residue Asp-239 participates in L-methionine binding. An L-methionine-binding site is contributed by Lys-270.

Belongs to the AdoMet synthase family. Homotetramer; dimer of dimers. Mg(2+) serves as cofactor. It depends on K(+) as a cofactor.

Its subcellular location is the cytoplasm. It catalyses the reaction L-methionine + ATP + H2O = S-adenosyl-L-methionine + phosphate + diphosphate. It participates in amino-acid biosynthesis; S-adenosyl-L-methionine biosynthesis; S-adenosyl-L-methionine from L-methionine: step 1/1. Its function is as follows. Catalyzes the formation of S-adenosylmethionine (AdoMet) from methionine and ATP. The overall synthetic reaction is composed of two sequential steps, AdoMet formation and the subsequent tripolyphosphate hydrolysis which occurs prior to release of AdoMet from the enzyme. This chain is S-adenosylmethionine synthase, found in Aliivibrio salmonicida (strain LFI1238) (Vibrio salmonicida (strain LFI1238)).